Consider the following 78-residue polypeptide: UPF0235 protein AF_2072 (78 aa).

Belongs to the UPF0235 family.

The polypeptide is UPF0235 protein AF_2072 (Archaeoglobus fulgidus (strain ATCC 49558 / DSM 4304 / JCM 9628 / NBRC 100126 / VC-16)).